Here is a 622-residue protein sequence, read N- to C-terminus: Low affinity potassium transport system protein Kup (622 aa).

12 helical membrane-spanning segments follow: residues 9–29 (LPAI…TSPL), 49–69 (VFGF…IKYL), 103–123 (VIMG…TPAI), 137–157 (PQLD…LFMI), 165–185 (VGKL…GLGL), 213–233 (VSFI…ALYA), 247–267 (WFTV…ALLL), 276–296 (PFFL…AALA), 337–357 (IYIP…IVSF), 363–383 (LAAA…ILST), 396–416 (FVAL…TANL), and 419–439 (LLSG…VMTT).

This sequence belongs to the HAK/KUP transporter (TC 2.A.72) family.

Its subcellular location is the cell inner membrane. It carries out the reaction K(+)(in) + H(+)(in) = K(+)(out) + H(+)(out). Responsible for the low-affinity transport of potassium into the cell. Likely operates as a K(+):H(+) symporter. The sequence is that of Low affinity potassium transport system protein Kup from Shigella sonnei (strain Ss046).